The chain runs to 326 residues: Intracellular serine protease (326 aa).

The 281-residue stretch at 23–303 folds into the Peptidase S8 domain; that stretch reads PRGVEMIQAP…NGLLYLTAVE (281 aa). Catalysis depends on charge relay system residues Asp49, His86, and Ser244.

This sequence belongs to the peptidase S8 family.

Functionally, involved in the generation of beta- and alpha-amylases from the large amylase precursor. The chain is Intracellular serine protease (isp) from Paenibacillus polymyxa (Bacillus polymyxa).